Here is a 202-residue protein sequence, read N- to C-terminus: MCLPAKWLHPVSLIFRVAGIGLAAVSAAAMLTASQCTVYADYGWRPRTVTYSDFPAFVYLVAATAIATLLEAVALFLSWSKKGKSKKSWRVLTMLLLGAVVPALLYTSAGAAFAVGWEDIYYYLEPIGRRFSVCRSSVAGGRFCEHVHVSMWLALGAAVAVSFAEFLTTFRWCHGSGSCSDSDSDSDSDSESGCGHGCHCKH.

At 1–10 (MCLPAKWLHP) the chain is on the cytoplasmic side. The helical transmembrane segment at 11–31 (VSLIFRVAGIGLAAVSAAAML) threads the bilayer. Residues 32 to 56 (TASQCTVYADYGWRPRTVTYSDFPA) are Extracellular-facing. The chain crosses the membrane as a helical span at residues 57–77 (FVYLVAATAIATLLEAVALFL). Residues 78–94 (SWSKKGKSKKSWRVLTM) lie on the Cytoplasmic side of the membrane. Residues 95-115 (LLLGAVVPALLYTSAGAAFAV) form a helical membrane-spanning segment. Residues 116–146 (GWEDIYYYLEPIGRRFSVCRSSVAGGRFCEH) lie on the Extracellular side of the membrane. A helical transmembrane segment spans residues 147-167 (VHVSMWLALGAAVAVSFAEFL). The Cytoplasmic segment spans residues 168-202 (TTFRWCHGSGSCSDSDSDSDSDSESGCGHGCHCKH).

Belongs to the Casparian strip membrane proteins (CASP) family. Homodimer and heterodimers.

The protein localises to the cell membrane. The protein is CASP-like protein 1U4 of Sorghum bicolor (Sorghum).